The following is a 501-amino-acid chain: Aldehyde dehydrogenase 1A1 (501 aa).

Position 2 is an N-acetylserine (S2). K91 and K128 each carry N6-acetyllysine. NAD(+)-binding positions include 167–170, 193–196, 226–227, and 246–247; these read IPWN, KPAE, GP, and GS. K252 bears the N6-acetyllysine mark. E269 serves as the catalytic Proton acceptor. Position 269–271 (269–271) interacts with NAD(+); sequence ELG. C303 serves as the catalytic Nucleophile. Positions 336 to 501 are mediates interaction with PRMT3; the sequence is LTPGVSQGPQ…VTIKISQKNS (166 aa). T337 bears the Phosphothreonine mark. 349 to 353 provides a ligand contact to NAD(+); the sequence is EQYEK. N6-acetyllysine occurs at positions 353 and 367. 400–402 is a binding site for NAD(+); that stretch reads EIF. K410 is subject to N6-acetyllysine. Phosphoserine is present on S413. 2 positions are modified to N6-acetyllysine: K419 and K495.

Belongs to the aldehyde dehydrogenase family. In terms of assembly, homotetramer. Interacts with PRMT3; the interaction is direct, inhibits ALDH1A1 aldehyde dehydrogenase activity and is independent of the methyltransferase activity of PRMT3. In terms of processing, the N-terminus is blocked most probably by acetylation.

The protein resides in the cytoplasm. Its subcellular location is the cytosol. The protein localises to the cell projection. It localises to the axon. The enzyme catalyses an aldehyde + NAD(+) + H2O = a carboxylate + NADH + 2 H(+). The catalysed reaction is all-trans-retinal + NAD(+) + H2O = all-trans-retinoate + NADH + 2 H(+). It carries out the reaction 9-cis-retinal + NAD(+) + H2O = 9-cis-retinoate + NADH + 2 H(+). It catalyses the reaction 11-cis-retinal + NAD(+) + H2O = 11-cis-retinoate + NADH + 2 H(+). The enzyme catalyses 13-cis-retinal + NAD(+) + H2O = 13-cis-retinoate + NADH + 2 H(+). The catalysed reaction is 3-deoxyglucosone + NAD(+) + H2O = 2-dehydro-3-deoxy-D-gluconate + NADH + 2 H(+). It carries out the reaction (E)-4-hydroxynon-2-enal + NAD(+) + H2O = (E)-4-hydroxynon-2-enoate + NADH + 2 H(+). It catalyses the reaction malonaldehyde + NAD(+) + H2O = 3-oxopropanoate + NADH + 2 H(+). The enzyme catalyses hexanal + NAD(+) + H2O = hexanoate + NADH + 2 H(+). The catalysed reaction is propanal + NAD(+) + H2O = propanoate + NADH + 2 H(+). It carries out the reaction acetaldehyde + NAD(+) + H2O = acetate + NADH + 2 H(+). It catalyses the reaction benzaldehyde + NAD(+) + H2O = benzoate + NADH + 2 H(+). The enzyme catalyses 4-aminobutanal + NAD(+) + H2O = 4-aminobutanoate + NADH + 2 H(+). Its pathway is cofactor metabolism; retinol metabolism. Its activity is regulated as follows. Inhibited by duocarmycin analogs. Its function is as follows. Cytosolic dehydrogenase that catalyzes the irreversible oxidation of a wide range of aldehydes to their corresponding carboxylic acid. Functions downstream of retinol dehydrogenases and catalyzes the oxidation of retinaldehyde into retinoic acid, the second step in the oxidation of retinol/vitamin A into retinoic acid. This pathway is crucial to control the levels of retinol and retinoic acid, two important molecules which excess can be teratogenic and cytotoxic. Also oxidizes aldehydes resulting from lipid peroxidation like (E)-4-hydroxynon-2-enal/HNE, malonaldehyde and hexanal that form protein adducts and are highly cytotoxic. By participating for instance to the clearance of (E)-4-hydroxynon-2-enal/HNE in the lens epithelium prevents the formation of HNE-protein adducts and lens opacification. Also functions downstream of fructosamine-3-kinase in the fructosamine degradation pathway by catalyzing the oxidation of 3-deoxyglucosone, the carbohydrate product of fructosamine 3-phosphate decomposition, which is itself a potent glycating agent that may react with lysine and arginine side-chains of proteins. Also has an aminobutyraldehyde dehydrogenase activity and is probably part of an alternative pathway for the biosynthesis of GABA/4-aminobutanoate in midbrain, thereby playing a role in GABAergic synaptic transmission. The chain is Aldehyde dehydrogenase 1A1 from Ovis aries (Sheep).